Consider the following 237-residue polypeptide: Casparian strip membrane protein 2 (237 aa).

Residues 1-48 (MSGSDTSGSVHVDEHGHGHGKASSSYDGAGAPAPAPAPFQGHRKAGSG) form a disordered region. The Cytoplasmic portion of the chain corresponds to 1-69 (MSGSDTSGSV…GSGGDGLRRC (69 aa)). Residues 70–90 (LGLIDFVLRVAAFGPTLAAAI) traverse the membrane as a helical segment. Residues 91 to 117 (SIGTSDERLSVFTNYFQFRARFDDFPA) lie on the Extracellular side of the membrane. The chain crosses the membrane as a helical span at residues 118-138 (FEFFIVANAIAAGYMVLSLPF). At 139–152 (SAATIMSSKATGVK) the chain is on the cytoplasmic side. A helical membrane pass occupies residues 153 to 173 (LLLLICDTIMVGLLTAAASAA). The Extracellular segment spans residues 174-205 (AAMVYVAHEGNLRANWVPICLQFHGFCQRTSG). Residues 206 to 226 (AVIASFLAVFVLMVLIVMAAF) traverse the membrane as a helical segment. Topologically, residues 227–237 (TMPRRTHHTAS) are cytoplasmic.

The protein belongs to the Casparian strip membrane proteins (CASP) family. As to quaternary structure, homodimer and heterodimers.

It is found in the cell membrane. In terms of biological role, regulates membrane-cell wall junctions and localized cell wall deposition. Required for establishment of the Casparian strip membrane domain (CSD) and the subsequent formation of Casparian strips, a cell wall modification of the root endodermis that determines an apoplastic barrier between the intraorganismal apoplasm and the extraorganismal apoplasm and prevents lateral diffusion. This Oryza sativa subsp. japonica (Rice) protein is Casparian strip membrane protein 2.